We begin with the raw amino-acid sequence, 307 residues long: Methionyl-tRNA formyltransferase (307 aa).

Residue 108–111 (SLLP) participates in (6S)-5,6,7,8-tetrahydrofolate binding.

The protein belongs to the Fmt family.

It catalyses the reaction L-methionyl-tRNA(fMet) + (6R)-10-formyltetrahydrofolate = N-formyl-L-methionyl-tRNA(fMet) + (6S)-5,6,7,8-tetrahydrofolate + H(+). Attaches a formyl group to the free amino group of methionyl-tRNA(fMet). The formyl group appears to play a dual role in the initiator identity of N-formylmethionyl-tRNA by promoting its recognition by IF2 and preventing the misappropriation of this tRNA by the elongation apparatus. The protein is Methionyl-tRNA formyltransferase of Xanthomonas axonopodis pv. citri (strain 306).